The chain runs to 266 residues: 4-diphosphocytidyl-2-C-methyl-D-erythritol kinase (266 aa).

Lys11 is a catalytic residue. Pro103 to Ser113 is a binding site for ATP. Asp145 is an active-site residue.

It belongs to the GHMP kinase family. IspE subfamily.

It catalyses the reaction 4-CDP-2-C-methyl-D-erythritol + ATP = 4-CDP-2-C-methyl-D-erythritol 2-phosphate + ADP + H(+). Its pathway is isoprenoid biosynthesis; isopentenyl diphosphate biosynthesis via DXP pathway; isopentenyl diphosphate from 1-deoxy-D-xylulose 5-phosphate: step 3/6. Its function is as follows. Catalyzes the phosphorylation of the position 2 hydroxy group of 4-diphosphocytidyl-2C-methyl-D-erythritol. This Sulfurimonas denitrificans (strain ATCC 33889 / DSM 1251) (Thiomicrospira denitrificans (strain ATCC 33889 / DSM 1251)) protein is 4-diphosphocytidyl-2-C-methyl-D-erythritol kinase.